Reading from the N-terminus, the 376-residue chain is Phytanoyl-CoA hydroxylase-interacting protein-like (376 aa).

In terms of domain architecture, Fibronectin type-III spans 52 to 161 (VPHNIKISNI…EIIEFCTADY (110 aa)).

It belongs to the PHYHIP family.

May play a role in the development of the central system. In Xenopus tropicalis (Western clawed frog), this protein is Phytanoyl-CoA hydroxylase-interacting protein-like (phyhipl).